Reading from the N-terminus, the 409-residue chain is Peptidase T (409 aa).

Residue His78 coordinates Zn(2+). The active site involves Asp80. Asp140 contributes to the Zn(2+) binding site. Glu173 serves as the catalytic Proton acceptor. Zn(2+) is bound by residues Glu174, Asp196, and His379.

It belongs to the peptidase M20B family. Requires Zn(2+) as cofactor.

The protein resides in the cytoplasm. The catalysed reaction is Release of the N-terminal residue from a tripeptide.. In terms of biological role, cleaves the N-terminal amino acid of tripeptides. This is Peptidase T from Salmonella paratyphi A (strain ATCC 9150 / SARB42).